A 319-amino-acid chain; its full sequence is GATA transcription factor 18 (319 aa).

Low complexity predominate over residues 1–15; the sequence is MPDAAAAAAAAQDAD. Residues 1-74 are disordered; sequence MPDAAAAAAA…AAPEPVSALL (74 aa). Over residues 32–60 the composition is skewed to acidic residues; sequence NNDDDGDDGTEEDEEEDDDEEGDEEELPP. Residues 74-109 enclose the Tify domain; sequence LPGSPNQLTLLFQGEVYVFESVTPEKVQAVLLLLGS. The CCT domain occupies 143–185; it reads RVASLIRFREKRKERNFDKKIRYAVRKEVALRMQRRKGQFAGR. Residues 215–242 form a GATA-type zinc finger; sequence CQNCGTSEKMTPAMRRGPAGPRTLCNAC. Positions 292–319 are disordered; the sequence is ITASHGEVMGDSTPANEAEIGAPKAQSQ.

This sequence belongs to the type IV zinc-finger family. Class C subfamily.

The protein resides in the nucleus. Transcriptional activator that specifically binds 5'-GATA-3' or 5'-GAT-3' motifs within gene promoters. The protein is GATA transcription factor 18 of Oryza sativa subsp. indica (Rice).